Reading from the N-terminus, the 418-residue chain is Lactosylceramide alpha-2,3-sialyltransferase (418 aa).

The segment at 1–25 is disordered; that stretch reads MRTKAAGCAERRPLQPRTEAAAAPA. The Cytoplasmic segment spans residues 1-61; the sequence is MRTKAAGCAE…RAQSKMRRPS (61 aa). Residues 62 to 82 form a helical; Signal-anchor for type II membrane protein membrane-spanning segment; sequence LLLKDILKCTLLVFGVWILYI. Residues 83-418 lie on the Lumenal side of the membrane; that stretch reads LKLNYTTEEC…DLSGGIDREF (336 aa). N-linked (GlcNAc...) asparagine glycans are attached at residues asparagine 86, asparagine 236, and asparagine 390. Cysteines 195 and 353 form a disulfide.

It belongs to the glycosyltransferase 29 family. Post-translationally, N-glycosylated. Ubiquitous. High expression in brain, skeletal muscle, placenta, and testis. mRNA widely distributed in human brain, but slightly elevated expression was observed in the cerebral cortex, temporal lobe, and putamen.

It is found in the golgi apparatus membrane. It catalyses the reaction a beta-D-Gal-(1-&gt;4)-beta-D-Glc-(1&lt;-&gt;1)-Cer(d18:1(4E)) + CMP-N-acetyl-beta-neuraminate = a ganglioside GM3 (d18:1(4E)) + CMP + H(+). The enzyme catalyses ganglioside GA2 (d18:1(4E)/18:0) + CMP-N-acetyl-beta-neuraminate = ganglioside GM2 (d18:1(4E)/18:0) + CMP + H(+). The catalysed reaction is a beta-D-Gal-(1&lt;-&gt;1')-ceramide + CMP-N-acetyl-beta-neuraminate = N-acetyl-alpha-neuraminosyl-(2-&gt;3)-beta-D-galactosyl-(1&lt;-&gt;1')-ceramide + CMP + H(+). It carries out the reaction a beta-D-galactosyl-(1&lt;-&gt;1')-N-acylsphing-4-enine + CMP-N-acetyl-beta-neuraminate = a ganglioside GM4 (d18:1(4E)) + CMP + H(+). It catalyses the reaction ganglioside GA1 (d18:1(4E)/18:0) + CMP-N-acetyl-beta-neuraminate = ganglioside GM1 (d18:1(4E)/18:0) + CMP + H(+). It participates in glycolipid biosynthesis. Functionally, transfers the sialyl group (N-acetyl-alpha-neuraminyl or NeuAc) from CMP-NeuAc to the non-reducing terminal galactose (Gal) of glycosphingolipids forming gangliosides (important molecules involved in the regulation of multiple cellular processes, including cell proliferation and differentiation, apoptosis, embryogenesis, development, and oncogenesis). Mainly involved in the biosynthesis of ganglioside GM3 but can also use different glycolipids as substrate acceptors such as D-galactosylceramide (GalCer), asialo-GM2 (GA2) and asialo-GM1 (GA1), although less preferentially than beta-D-Gal-(1-&gt;4)-beta-D-Glc-(1&lt;-&gt;1)-Cer (LacCer). In Homo sapiens (Human), this protein is Lactosylceramide alpha-2,3-sialyltransferase (ST3GAL5).